We begin with the raw amino-acid sequence, 83 residues long: Salivary thrombin inhibitor anophelin (83 aa).

The signal sequence occupies residues 1 to 22; it reads MANKLVLISLLCVVLVAKITQA. Positions 25 to 51 are disordered; the sequence is QYAPGDEPSYDEDTDDSDKLVENDTSI. Residue Asn-47 is glycosylated (N-linked (GlcNAc...) asparagine). The segment at 54–83 is sufficient for host thrombin inhibition; it reads EDYAAIEASLSETFNTAADPGRRLGEGSKP. Positions 56-62 are blocks exosite I of host thrombin; it reads YAAIEAS. Positions 64 to 83 are disordered; sequence SETFNTAADPGRRLGEGSKP. Residues 72–75 form a blocks active site cleft of host thrombin in a reverse direction compared to substrates region; sequence DPGR. Basic and acidic residues predominate over residues 73 to 83; it reads PGRRLGEGSKP.

The protein belongs to the anophelin family. In terms of assembly, interacts with human F2 (thrombin); the interaction results in thrombin inhibition. Salivary gland (at protein level).

It localises to the secreted. Its activity is regulated as follows. Increasing concentration of NaCl decreases affinity for thrombin. In terms of biological role, salivary protein with anticoagulant activity that inhibits host thrombin (F2); binds to the proteinase in a reverse orientation (opposite to substrates). Inhibits thrombin-induced platelet aggregation. The polypeptide is Salivary thrombin inhibitor anophelin (Anopheles albimanus (New world malaria mosquito)).